Consider the following 173-residue polypeptide: MSSNLPEFNYLSEYNSGNYFHLHESIYENAHINIYYKIKFDPITYLMLVDKINRIKETDMFYITYKTETANIFVAKLNYMIKLPIQVLCLESVFENPKDTKILRPEINNISLCKYKDNISVTINIDLTNFSKILDNIDHINSTINCTDNNNFLDIDGNHNDNNQFNKKKLCFL.

This is an uncharacterized protein from Acanthamoeba polyphaga (Amoeba).